A 244-amino-acid chain; its full sequence is MTLDLDATKKDDKLLITTIQQEYKILAEYKMIESEKLSGIYVIPSYVNSLQWFGVFFGRQGLYMESVFRFTILLPDRFPDDKSLPTIIFQQDVIHPHVCPYTHSLDVSHAFPEWRCGEDHLWQLLKYLQAIFSDPLDSIRGIEVDKLKNSEAAELLITNKEEYMARVQKNIKESKDHIFDTPPTEDPHYIVFEKFQQDVHGPVLERIKAGRSKQTEPSVQQANGGHATGLSWVKEGEFKPLSIE.

The UBC core domain occupies 20 to 176 (QQEYKILAEY…VQKNIKESKD (157 aa)).

It belongs to the ubiquitin-conjugating enzyme family. FTS subfamily.

The sequence is that of Protein crossbronx (cbx) from Drosophila yakuba (Fruit fly).